The chain runs to 60 residues: Putative transcriptional regulator XtpA (60 aa).

Its function is as follows. Controls the expression of small non-coding RNA GcvB, which represses the expression of many amino acid transporter proteins and uptake of aminoglycoside antibiotics in cells. Might be a transcriptional activator. An RNA (xtr) with a tRNA-like fold possibly derived from tRNA-Arg(UCG) is encoded entirely within the protein; xtr does not have the sequence corresponding to tRNA anticodon or variable arms. 10 synonymous codon changes in the xtr region of xtpA have the same phenotype as a deletion mutation, suggesting the mRNA secondary structure is important for function. The chain is Putative transcriptional regulator XtpA from Escherichia coli (strain K12).